The sequence spans 70 residues: Large ribosomal subunit protein bL32c (70 aa).

Disordered stretches follow at residues 1–20 (MAVP…KNVR) and 51–70 (NDDS…LDDP). Residues 52-61 (DDSSGSSESK) show a composition bias toward polar residues.

It belongs to the bacterial ribosomal protein bL32 family.

The protein localises to the plastid. It localises to the chloroplast. The protein is Large ribosomal subunit protein bL32c (rpl32) of Pinus thunbergii (Japanese black pine).